The following is a 131-amino-acid chain: Snaclec alboaggregin-A subunit alpha (131 aa).

Positions 1–131 (DCPSDWSSYD…EYPFVCKFXR (131 aa)) constitute a C-type lectin domain. Cystine bridges form between Cys-2–Cys-13, Cys-30–Cys-127, and Cys-102–Cys-119.

This sequence belongs to the snaclec family. In terms of assembly, heterotetramer of the subunits alpha, alpha', beta and beta'; disulfide-linked. Expressed by the venom gland.

It localises to the secreted. In terms of biological role, potent platelet activator that aggregates platelets via both GPIbalpha (GP1BA) and GPVI (GP6). Induces a tyrosine phosphorylation profile in platelets that resembles this produced by collagen, involving the time dependent tyrosine phosphorylation of Fc receptor gamma chain (FCGR1A), phospholipase Cgamma2 (PLCG2), and LAT. This is Snaclec alboaggregin-A subunit alpha from Trimeresurus albolabris (White-lipped pit viper).